Reading from the N-terminus, the 504-residue chain is D-alanine--D-alanyl carrier protein ligase (504 aa).

Residue 152–153 (TS) participates in ATP binding. A D-alanine-binding site is contributed by D197. Residue 292 to 297 (NTYGPT) participates in ATP binding. V301 contacts D-alanine. ATP contacts are provided by residues D383, 394–397 (YNGR), and K492. K492 contributes to the D-alanine binding site.

This sequence belongs to the ATP-dependent AMP-binding enzyme family. DltA subfamily.

The protein localises to the cytoplasm. It carries out the reaction holo-[D-alanyl-carrier protein] + D-alanine + ATP = D-alanyl-[D-alanyl-carrier protein] + AMP + diphosphate. The protein operates within cell wall biogenesis; lipoteichoic acid biosynthesis. Its function is as follows. Catalyzes the first step in the D-alanylation of lipoteichoic acid (LTA), the activation of D-alanine and its transfer onto the D-alanyl carrier protein (Dcp) DltC. In an ATP-dependent two-step reaction, forms a high energy D-alanyl-AMP intermediate, followed by transfer of the D-alanyl residue as a thiol ester to the phosphopantheinyl prosthetic group of the Dcp. D-alanylation of LTA plays an important role in modulating the properties of the cell wall in Gram-positive bacteria, influencing the net charge of the cell wall. The chain is D-alanine--D-alanyl carrier protein ligase from Bacillus cereus (strain ATCC 10987 / NRS 248).